Here is a 459-residue protein sequence, read N- to C-terminus: Bifunctional protein GlmU (459 aa).

Residues 1–229 (MSNYAIILAA…FDESLGVNDR (229 aa)) form a pyrophosphorylase region. UDP-N-acetyl-alpha-D-glucosamine contacts are provided by residues 8–11 (LAAG), lysine 22, glutamine 72, and 77–78 (GT). Aspartate 102 contacts Mg(2+). UDP-N-acetyl-alpha-D-glucosamine contacts are provided by glycine 139, glutamate 154, asparagine 169, and asparagine 227. Asparagine 227 serves as a coordination point for Mg(2+). The segment at 230–250 (VALATAEKVMRHRIARQHMVN) is linker. Residues 251-459 (GVTVVNPDSA…NKKPHHPSQK (209 aa)) are N-acetyltransferase. Positions 332 and 350 each coordinate UDP-N-acetyl-alpha-D-glucosamine. Catalysis depends on histidine 362, which acts as the Proton acceptor. Residues tyrosine 365 and asparagine 376 each coordinate UDP-N-acetyl-alpha-D-glucosamine. Acetyl-CoA contacts are provided by residues alanine 379, 385–386 (NY), serine 404, alanine 422, and arginine 439.

In the N-terminal section; belongs to the N-acetylglucosamine-1-phosphate uridyltransferase family. This sequence in the C-terminal section; belongs to the transferase hexapeptide repeat family. Homotrimer. Requires Mg(2+) as cofactor.

It is found in the cytoplasm. It catalyses the reaction alpha-D-glucosamine 1-phosphate + acetyl-CoA = N-acetyl-alpha-D-glucosamine 1-phosphate + CoA + H(+). The enzyme catalyses N-acetyl-alpha-D-glucosamine 1-phosphate + UTP + H(+) = UDP-N-acetyl-alpha-D-glucosamine + diphosphate. It participates in nucleotide-sugar biosynthesis; UDP-N-acetyl-alpha-D-glucosamine biosynthesis; N-acetyl-alpha-D-glucosamine 1-phosphate from alpha-D-glucosamine 6-phosphate (route II): step 2/2. Its pathway is nucleotide-sugar biosynthesis; UDP-N-acetyl-alpha-D-glucosamine biosynthesis; UDP-N-acetyl-alpha-D-glucosamine from N-acetyl-alpha-D-glucosamine 1-phosphate: step 1/1. It functions in the pathway bacterial outer membrane biogenesis; LPS lipid A biosynthesis. In terms of biological role, catalyzes the last two sequential reactions in the de novo biosynthetic pathway for UDP-N-acetylglucosamine (UDP-GlcNAc). The C-terminal domain catalyzes the transfer of acetyl group from acetyl coenzyme A to glucosamine-1-phosphate (GlcN-1-P) to produce N-acetylglucosamine-1-phosphate (GlcNAc-1-P), which is converted into UDP-GlcNAc by the transfer of uridine 5-monophosphate (from uridine 5-triphosphate), a reaction catalyzed by the N-terminal domain. The protein is Bifunctional protein GlmU of Streptococcus agalactiae serotype III (strain NEM316).